A 90-amino-acid chain; its full sequence is Probable Fe(2+)-trafficking protein (90 aa).

The protein belongs to the Fe(2+)-trafficking protein family.

Its function is as follows. Could be a mediator in iron transactions between iron acquisition and iron-requiring processes, such as synthesis and/or repair of Fe-S clusters in biosynthetic enzymes. The chain is Probable Fe(2+)-trafficking protein from Aeromonas hydrophila subsp. hydrophila (strain ATCC 7966 / DSM 30187 / BCRC 13018 / CCUG 14551 / JCM 1027 / KCTC 2358 / NCIMB 9240 / NCTC 8049).